The primary structure comprises 503 residues: REST corepressor 2 (503 aa).

Positions Met1 to Ser62 are disordered. The region spanning Ser41 to Thr126 is the ELM2 domain. The region spanning Pro127–Ser178 is the SANT 1 domain. Coiled-coil stretches lie at residues Val182–Lys206 and Gln286–Gly314. One can recognise an SANT 2 domain in the interval Lys327–Asn378. Residues Glu385–Ser503 form a disordered region. Polar residues predominate over residues Thr399–Pro412. The span at Ser423–Ser442 shows a compositional bias: low complexity.

The protein belongs to the CoREST family.

Its subcellular location is the nucleus. Its function is as follows. May act as a component of a corepressor complex that represses transcription. The protein is REST corepressor 2 (rcor2) of Xenopus laevis (African clawed frog).